The following is a 257-amino-acid chain: Putative aldolase class 2 protein CC_1201 (257 aa).

Residues His114, His116, and His177 each contribute to the Zn(2+) site.

It belongs to the aldolase class II family. It depends on Zn(2+) as a cofactor.

The protein is Putative aldolase class 2 protein CC_1201 of Caulobacter vibrioides (strain ATCC 19089 / CIP 103742 / CB 15) (Caulobacter crescentus).